We begin with the raw amino-acid sequence, 249 residues long: Probable septum site-determining protein MinC (249 aa).

A disordered region spans residues 116–149; it reads AAVSPPPPPPPPPARAEPAAPVARPAPGRMQRNA. Over residues 119–130 the composition is skewed to pro residues; sequence SPPPPPPPPPAR. Positions 131–142 are enriched in low complexity; sequence AEPAAPVARPAP.

It belongs to the MinC family. Interacts with MinD and FtsZ.

Its function is as follows. Cell division inhibitor that blocks the formation of polar Z ring septums. Rapidly oscillates between the poles of the cell to destabilize FtsZ filaments that have formed before they mature into polar Z rings. Prevents FtsZ polymerization. This chain is Probable septum site-determining protein MinC, found in Xanthomonas campestris pv. campestris (strain ATCC 33913 / DSM 3586 / NCPPB 528 / LMG 568 / P 25).